The chain runs to 245 residues: Probable transcriptional regulatory protein Ddes_0536 (245 aa).

Residues 1–21 (MAGHSKWANIQHRKGRQDAKR) form a disordered region.

The protein belongs to the TACO1 family.

The protein localises to the cytoplasm. This Desulfovibrio desulfuricans (strain ATCC 27774 / DSM 6949 / MB) protein is Probable transcriptional regulatory protein Ddes_0536.